The primary structure comprises 434 residues: Eukaryotic translation initiation factor 3 subunit E (434 aa).

A PCI domain is found at 219-392 (FFNHPKGRDL…GHVVMGTQPL (174 aa)).

The protein belongs to the eIF-3 subunit E family. Component of the eukaryotic translation initiation factor 3 (eIF-3) complex. The eIF-3 complex interacts with pix. Interacts with mxt.

The protein localises to the cytoplasm. Functionally, component of the eukaryotic translation initiation factor 3 (eIF-3) complex, which is involved in protein synthesis of a specialized repertoire of mRNAs and, together with other initiation factors, stimulates binding of mRNA and methionyl-tRNAi to the 40S ribosome. The eIF-3 complex specifically targets and initiates translation of a subset of mRNAs involved in cell proliferation. The chain is Eukaryotic translation initiation factor 3 subunit E (eIF3-S6) from Drosophila persimilis (Fruit fly).